We begin with the raw amino-acid sequence, 115 residues long: Large ribosomal subunit protein bL20 (115 aa).

It belongs to the bacterial ribosomal protein bL20 family.

In terms of biological role, binds directly to 23S ribosomal RNA and is necessary for the in vitro assembly process of the 50S ribosomal subunit. It is not involved in the protein synthesizing functions of that subunit. This chain is Large ribosomal subunit protein bL20, found in Synechococcus sp. (strain CC9311).